Consider the following 551-residue polypeptide: Mesoderm induction early response protein 3 (551 aa).

Low complexity predominate over residues 1–16 (MAEASFGSSSPVGSLS). Disordered regions lie at residues 1 to 62 (MAEA…EKEG) and 113 to 169 (LSGD…GNSP). The segment covering 17 to 36 (SEDHDFDPTAEMLVHDYDDE) has biased composition (basic and acidic residues). Phosphoserine occurs at positions 52, 53, and 114. A compositionally biased stretch (polar residues) spans 121–134 (QSSADDLTPSVTSH). Positions 154–163 (KESEIEDVET) are enriched in acidic residues. S156 bears the Phosphoserine mark. T163 is modified (phosphothreonine). 2 positions are modified to phosphoserine: S165 and S168. The ELM2 domain maps to 174 to 273 (REIMIGLEYQ…EAIERYCCNG (100 aa)). The 53-residue stretch at 278–330 (EGMTAWTEEECRSFEHALMLHGKDFHLIQKDKVRSRTVAECVAFYYMWKKSER) folds into the SANT domain.

The protein resides in the nucleus. Functionally, transcriptional repressor. The chain is Mesoderm induction early response protein 3 (Mier3) from Mus musculus (Mouse).